The following is a 195-amino-acid chain: Probable GTP-binding protein EngB (195 aa).

In terms of domain architecture, EngB-type G spans 24–195 (DIPEIALAGR…AAWDAILSKI (172 aa)). GTP is bound by residues 32 to 39 (GRSNVGKS), 59 to 63 (GKTQL), 77 to 80 (DVPG), 144 to 147 (TKAD), and 176 to 178 (FSS). Mg(2+) contacts are provided by serine 39 and threonine 61.

The protein belongs to the TRAFAC class TrmE-Era-EngA-EngB-Septin-like GTPase superfamily. EngB GTPase family. The cofactor is Mg(2+).

Necessary for normal cell division and for the maintenance of normal septation. This chain is Probable GTP-binding protein EngB, found in Streptococcus sanguinis (strain SK36).